The primary structure comprises 66 residues: uncharacterized protein (66 aa).

This sequence to E.coli YfhJ.

This is an uncharacterized protein from Pseudomonas aeruginosa (strain ATCC 15692 / DSM 22644 / CIP 104116 / JCM 14847 / LMG 12228 / 1C / PRS 101 / PAO1).